Consider the following 61-residue polypeptide: MAKDYVTGKKTTFGNKRSHAMNSVRRAWKPNLQKVRILVDGKPKRVWVSTKALKSGKVTRA.

The disordered stretch occupies residues 1–21 (MAKDYVTGKKTTFGNKRSHAM).

Belongs to the bacterial ribosomal protein bL28 family.

This is Large ribosomal subunit protein bL28 from Lactobacillus helveticus (strain DPC 4571).